We begin with the raw amino-acid sequence, 134 residues long: Cilia- and flagella-associated protein 144 (134 aa).

The interval 76-95 (QGPRKKYPETQTENQEVGWD) is disordered.

This sequence belongs to the CFAP144 family. In terms of assembly, microtubule inner protein component of sperm flagellar doublet microtubules.

The protein localises to the cytoplasm. Its subcellular location is the cytoskeleton. It is found in the cilium axoneme. The protein resides in the flagellum axoneme. Functionally, microtubule inner protein (MIP) part of the dynein-decorated doublet microtubules (DMTs) in cilia axoneme, which is required for motile cilia beating. This is Cilia- and flagella-associated protein 144 from Homo sapiens (Human).